Consider the following 134-residue polypeptide: Ribonuclease VapC1 (134 aa).

The region spanning 4–123 (IIDTSIIIAL…LNVKDFKRIQ (120 aa)) is the PINc domain. The Mg(2+) site is built by Asp6 and Asp97.

Belongs to the PINc/VapC protein family. It depends on Mg(2+) as a cofactor.

Toxic component of a type II toxin-antitoxin (TA) system. Has ssRNase activity. Upon expression in E.coli inhibits growth in liquid culture; this toxic effect is neutralized by coexpression with cognate antitoxin VapB1. Its RNase activity is partially inhibited in vitro by VapB1. This Rickettsia felis (strain ATCC VR-1525 / URRWXCal2) (Rickettsia azadi) protein is Ribonuclease VapC1.